The following is a 244-amino-acid chain: tRNA (guanine-N(1)-)-methyltransferase (244 aa).

S-adenosyl-L-methionine contacts are provided by residues G120 and 140–145; that span reads IGDYIL.

The protein belongs to the RNA methyltransferase TrmD family. In terms of assembly, homodimer.

The protein resides in the cytoplasm. The enzyme catalyses guanosine(37) in tRNA + S-adenosyl-L-methionine = N(1)-methylguanosine(37) in tRNA + S-adenosyl-L-homocysteine + H(+). Its function is as follows. Specifically methylates guanosine-37 in various tRNAs. The protein is tRNA (guanine-N(1)-)-methyltransferase of Brucella abortus (strain S19).